Here is a 150-residue protein sequence, read N- to C-terminus: Snaclec 7 (150 aa).

The signal sequence occupies residues 1–23 (MGRFISISFGLLVVFLSLSGTGA). 3 cysteine pairs are disulfide-bonded: C27/C38, C55/C144, and C121/C136. Residues 34–145 (YEGYCYKVFN…CNDPRYFVCK (112 aa)) form the C-type lectin domain.

Belongs to the snaclec family. As to quaternary structure, heterodimer; disulfide-linked.

It localises to the secreted. In terms of biological role, interferes with one step of hemostasis (modulation of platelet aggregation, or coagulation cascade, for example). This Daboia siamensis (Eastern Russel's viper) protein is Snaclec 7.